Reading from the N-terminus, the 340-residue chain is Organic solute transporter subunit alpha (340 aa).

Over Met-1–Pro-48 the chain is Extracellular. An N-linked (GlcNAc...) asparagine glycan is attached at Asn-25. A helical transmembrane segment spans residues Val-49–Leu-69. At Glu-70–Thr-87 the chain is on the cytoplasmic side. Residues Leu-88 to Ile-108 form a helical membrane-spanning segment. Over Pro-109–Leu-114 the chain is Extracellular. A helical membrane pass occupies residues Val-115–Val-135. The Cytoplasmic segment spans residues Glu-136–Leu-181. The helical transmembrane segment at Leu-182–Ile-202 threads the bilayer. Residues Pro-203–Leu-219 are Extracellular-facing. Residues Trp-220 to Phe-240 traverse the membrane as a helical segment. Residues Arg-241–Lys-255 lie on the Cytoplasmic side of the membrane. The chain crosses the membrane as a helical span at residues Phe-256–Leu-276. The Extracellular segment spans residues Ala-277 to Met-297. The chain crosses the membrane as a helical span at residues Asn-298–Tyr-317. The Cytoplasmic segment spans residues Arg-318 to Ala-340. Ser-330 bears the Phosphoserine mark.

It belongs to the OST-alpha family. As to quaternary structure, interacts with SLC51B. The Ost-alpha/Ost-beta complex is a heterodimer composed of alpha (SLC51A) and beta (SLC51B) subunit. In terms of processing, N-glycosylated. Present at high levels in ileum. In ileum, it is restricted to the apical domain on the mature villus enterocytes with little detectable expression in the goblet cells or crypt enterocytes (at protein level). Expressed in kidney but not in heart, brain, liver, spleen, embryo, lung, thymus, ovary nor testis.

It is found in the cell membrane. The protein resides in the endoplasmic reticulum membrane. It carries out the reaction taurocholate(out) = taurocholate(in). It catalyses the reaction tauroursodeoxycholate(out) = tauroursodeoxycholate(in). The enzyme catalyses glycoursodeoxycholate(out) = glycoursodeoxycholate(in). The catalysed reaction is glycocholate(out) = glycocholate(in). It carries out the reaction taurochenodeoxycholate(out) = taurochenodeoxycholate(in). It catalyses the reaction glycochenodeoxycholate(out) = glycochenodeoxycholate(in). The enzyme catalyses taurodeoxycholate(out) = taurodeoxycholate(in). The catalysed reaction is glycodeoxycholate(out) = glycodeoxycholate(in). It carries out the reaction prostaglandin E2(out) = prostaglandin E2(in). It catalyses the reaction estrone 3-sulfate(out) = estrone 3-sulfate(in). The enzyme catalyses dehydroepiandrosterone 3-sulfate(out) = dehydroepiandrosterone 3-sulfate(in). In terms of biological role, essential component of the Ost-alpha/Ost-beta complex, a heterodimer that acts as the intestinal basolateral transporter responsible for bile acid export from enterocytes into portal blood. Efficiently transports the major species of bile acids (taurocholate). Taurine conjugates are transported more efficiently across the basolateral membrane than glycine-conjugated bile acids. Can also transport steroids such as estrone 3-sulfate and dehydroepiandrosterone 3-sulfate, therefore playing a role in the enterohepatic circulation of sterols. Able to transport eicosanoids such as prostaglandin E2. This chain is Organic solute transporter subunit alpha (Slc51a), found in Mus musculus (Mouse).